Consider the following 1049-residue polypeptide: MVREKAQVTMGSTTMDMLEDEVVKAQDRRWRLRLRNPWACSAYTLVTTALGFAAFFLMLQSFLTKQLDTKGCEMVYMRPMYSKFDDFDTEHTRFASKYSLYLYREWGIDEEFTVKGAPVLFIPGNAGSYKQVRSLAAESAYHYHNSVQHESNAGKGERRPLDFFAVDFNEDFTAFHGQTVLDQAEYLNDAITFILSLYHTPGRSRRDPHLPDPTSVIIVGHSMGGVVARTLFTMPNYQANSINTIVTIAAPHARPPVSFDGDIVRTQNAVNSYWRSAYAQDSAKDNPLQHVTLVSIAGGGLDNIVSSDYASIASIVPETHGFTVFSSSIPNCWTGADHLAITWCDQVRKSIVRALYDVVDVSQAMQTLPVTNRMRFFKKWFLTGLEDIAEKTLPMTTEATLLTVDVDTAILPQEEQLVLRSLGRSSPNIKAFLLPVPPRDRGEKIFTLLTNERLDGPGEHGRLEVLFCSMSSAQSTQSYLTHLDFAGESPTATKLACKNAASDVIILPESTSHSNFPFRPDQAPFSYLQYDVRDLAQHQFVAVLDKVAHHSAGWVVAAFSASSEATVKVNPSLQRLLYTGISLQLPPRRPLTTEISIPALHSSLLAYDVHISRQKCSQGELFAPLLRQYISDLYESKFFVNVEDAMINVHGRGRPTCRAALSSKSPSNGLSLQIWADPTCDSSIDVTLKVDFLGSLGKLWMRYRIVFAAFPLLVVALVLCQQFRTYDATGVFISFAQSLNECMYSSLPLAITALTFLSITLATAQMQSKKLQALGGPASIIGAFFDNDNELLLGSEDPFFWFLVPLFGIMCTAICVMVNYVVLILTYLFATLYALVRSNRLLDASGQRTPDAFAVTSTRRRIINTLILLSLISTAIPYHFAYVVLCIVQLATCIRGFRLAKEAQLDTNYNFYNYAHSIFILMLWILPINLPVLVVWIRNLAIQWLTPFSSHHNVLSITPFILLVETLSTGRMVPRVRPGISLFTNVFLFAIGAYAAVYGVTYAYVLHHLANILCAWLVAIHFDTLGLAFEDSSKGVAVVGGRSEGKKRP.

The helical transmembrane segment at 39–59 threads the bilayer; sequence ACSAYTLVTTALGFAAFFLML. Serine 222 is an active-site residue. The next 8 helical transmembrane spans lie at 699 to 719, 742 to 762, 798 to 818, 867 to 887, 917 to 937, 944 to 964, 986 to 1006, and 1009 to 1029; these read LWMR…ALVL, CMYS…ITLA, PFFW…CVMV, ILLS…VLCI, SIFI…VVWI, WLTP…ILLV, VFLF…AYVL, and LANI…GLAF.

This sequence belongs to the GPI inositol-deacylase family.

The protein localises to the endoplasmic reticulum membrane. Its function is as follows. Involved in inositol deacylation of GPI-anchored proteins which plays important roles in the quality control and ER-associated degradation of GPI-anchored proteins. This Phaeosphaeria nodorum (strain SN15 / ATCC MYA-4574 / FGSC 10173) (Glume blotch fungus) protein is GPI inositol-deacylase (BST1).